The primary structure comprises 440 residues: Serine protease inhibitor A3G (440 aa).

The segment at 357–382 (GTEAAAATGMAGVGCCAVFDFLEIFF) is RCL.

Belongs to the serpin family. Expressed in bone marrow (particularly hematopoietic stem cells), heart, kidney, liver, lung, skeletal muscle, spleen, testis, thymus and T-cells.

It localises to the cytoplasm. Its subcellular location is the nucleus. Functionally, serine and cysteine protease inhibitor. Can inhibit lysosomal papain-like proteases including the cathepsins B, G, H, K, L and V. Ineffective against elastase, granzyme A, granzyme B, or caspases 3, 8 or 9. Inhibition of cytoplasmic cathepsin B following release from the lysosome may protect cells from apoptosis. This may facilitate the survival of progenitor T-cells and the subsequent development of long term memory CD8 T-cells. The protein is Serine protease inhibitor A3G (Serpina3g) of Mus musculus (Mouse).